The following is a 361-amino-acid chain: UDP-3-O-acylglucosamine N-acyltransferase (361 aa).

Residue H264 is the Proton acceptor of the active site.

The protein belongs to the transferase hexapeptide repeat family. LpxD subfamily. Homotrimer.

The enzyme catalyses a UDP-3-O-[(3R)-3-hydroxyacyl]-alpha-D-glucosamine + a (3R)-hydroxyacyl-[ACP] = a UDP-2-N,3-O-bis[(3R)-3-hydroxyacyl]-alpha-D-glucosamine + holo-[ACP] + H(+). It participates in bacterial outer membrane biogenesis; LPS lipid A biosynthesis. In terms of biological role, catalyzes the N-acylation of UDP-3-O-acylglucosamine using 3-hydroxyacyl-ACP as the acyl donor. Is involved in the biosynthesis of lipid A, a phosphorylated glycolipid that anchors the lipopolysaccharide to the outer membrane of the cell. This is UDP-3-O-acylglucosamine N-acyltransferase from Bordetella avium (strain 197N).